A 67-amino-acid chain; its full sequence is Bowman-Birk type proteinase inhibitor A4 (67 aa).

4 disulfide bridges follow: Cys-10–Cys-29, Cys-16–Cys-27, Cys-36–Cys-43, and Cys-40–Cys-57.

The protein belongs to the Bowman-Birk serine protease inhibitor family. Expressed in bulb (at protein level).

Serine protease inhibitor. Inhibits trypsin (Ki=12nM) and weakly inhibits chymotrypsin with (Ki=460nm). Does not inhibit bacterial subtilisin. The protein is Bowman-Birk type proteinase inhibitor A4 of Hyacinthus orientalis (Common hyacinth).